A 378-amino-acid polypeptide reads, in one-letter code: Cytochrome b (378 aa).

A run of 4 helical transmembrane segments spans residues 35–55 (FGSLLGLVLSIQLVTGIFLAM), 79–101 (WIIRLVHANGASFFFICLYCHIG), 114–134 (TWIMGVLLFILVMAAAFLGYV), and 180–200 (FFSLHFLVPFLVSLGAMLHIF). Positions 85 and 99 each coordinate heme b. Heme b contacts are provided by His184 and His198. His203 is a binding site for a ubiquinone. 4 helical membrane-spanning segments follow: residues 226–246 (YSAKDLLGFFFMFFFIIFISF), 290–310 (LGGVLGLLCALLVLFSLPLTH), 326–346 (FFWLFIVSFLMLTIGGGQPVC), and 350–370 (VMCSQVWSCLYFTYFILCGPL).

The protein belongs to the cytochrome b family. In terms of assembly, the main subunits of complex b-c1 are: cytochrome b, cytochrome c1 and the Rieske protein. The cofactor is heme b.

It localises to the mitochondrion inner membrane. Functionally, component of the ubiquinol-cytochrome c reductase complex (complex III or cytochrome b-c1 complex) that is part of the mitochondrial respiratory chain. The b-c1 complex mediates electron transfer from ubiquinol to cytochrome c. Contributes to the generation of a proton gradient across the mitochondrial membrane that is then used for ATP synthesis. This Paraspadella gotoi (Arrow worm) protein is Cytochrome b (mt:Cyt-b).